The primary structure comprises 219 residues: Counting factor-associated protein C (219 aa).

Positions 1–16 are cleaved as a signal peptide; sequence MKVLILLVSLISVCFS. N-linked (GlcNAc...) asparagine glycosylation is found at Asn-74 and Asn-123.

It is found in the secreted. The protein is Counting factor-associated protein C (cfaC) of Dictyostelium discoideum (Social amoeba).